The following is a 258-amino-acid chain: Sec-independent protein translocase protein TatC (258 aa).

Residues 2–23 (SVEDTQPLITHLIELRKRLLNC) are Cytoplasmic-facing. A helical transmembrane segment spans residues 24-44 (IIAVIVIFLCLVYFANDIYHL). The Periplasmic portion of the chain corresponds to 45-75 (VSAPLIKQLPQGSTMIATDVASPFFTPIKLT). The chain crosses the membrane as a helical span at residues 76–96 (FMVSLILSAPVILYQVWAFIA). Topologically, residues 97–115 (PALYKHERRLVVPLLVSSS) are cytoplasmic. The helical transmembrane segment at 116 to 136 (LLFYIGMAFAYFVVFPLAFGF) threads the bilayer. At 137–156 (LANTAPEGVQVSTDIASYLS) the chain is on the periplasmic side. The helical transmembrane segment at 157 to 177 (FVMALFMAFGVSFEVPVAIVL) threads the bilayer. Residues 178–192 (LCWMGITSPEDLRKK) lie on the Cytoplasmic side of the membrane. Residues 193–210 (RPYVLVGAFVVGMLLTPP) traverse the membrane as a helical segment. Position 211 (Asp-211) is a topological domain, periplasmic. A helical transmembrane segment spans residues 212-232 (VFSQTLLAIPMYCLFEIGVFF). At 233 to 258 (SRFYVGKGRNREEENDAEAESEKTEE) the chain is on the cytoplasmic side.

It belongs to the TatC family. The Tat system comprises two distinct complexes: a TatABC complex, containing multiple copies of TatA, TatB and TatC subunits, and a separate TatA complex, containing only TatA subunits. Substrates initially bind to the TatABC complex, which probably triggers association of the separate TatA complex to form the active translocon. TatC can form a distinct, stable, multimeric complex independent of TatA and TatB. Each of TatA, TatB and TatC are able to interact in pairs without the third partner. Interacts with the signal sequence of DmsA and DmsD.

It localises to the cell inner membrane. Functionally, part of the twin-arginine translocation (Tat) system that transports large folded proteins containing a characteristic twin-arginine motif in their signal peptide across membranes. Together with TatB, TatC is part of a receptor directly interacting with Tat signal peptides. This Escherichia coli (strain K12) protein is Sec-independent protein translocase protein TatC.